The sequence spans 154 residues: Probable chemoreceptor glutamine deamidase CheD (154 aa).

This sequence belongs to the CheD family.

It catalyses the reaction L-glutaminyl-[protein] + H2O = L-glutamyl-[protein] + NH4(+). Functionally, probably deamidates glutamine residues to glutamate on methyl-accepting chemotaxis receptors (MCPs), playing an important role in chemotaxis. The protein is Probable chemoreceptor glutamine deamidase CheD of Methanococcus maripaludis (strain DSM 14266 / JCM 13030 / NBRC 101832 / S2 / LL).